We begin with the raw amino-acid sequence, 261 residues long: UPF0328 protein ECU03_1620 (261 aa).

This sequence belongs to the UPF0328 family.

This Encephalitozoon cuniculi (strain GB-M1) (Microsporidian parasite) protein is UPF0328 protein ECU03_1620.